Here is a 232-residue protein sequence, read N- to C-terminus: Ribonuclease 3 (232 aa).

The RNase III domain occupies 5–134 (QTVLKNHFAI…FLGALLLDKD (130 aa)). E47 contacts Mg(2+). D51 is a catalytic residue. The Mg(2+) site is built by D120 and E123. E123 is an active-site residue. In terms of domain architecture, DRBM spans 160-229 (DYKTHLQELL…AKNAVEKGLD (70 aa)).

Belongs to the ribonuclease III family. As to quaternary structure, homodimer. It depends on Mg(2+) as a cofactor.

It is found in the cytoplasm. The enzyme catalyses Endonucleolytic cleavage to 5'-phosphomonoester.. In terms of biological role, digests double-stranded RNA. Involved in the processing of primary rRNA transcript to yield the immediate precursors to the large and small rRNAs (23S and 16S). Processes some mRNAs, and tRNAs when they are encoded in the rRNA operon. Processes pre-crRNA and tracrRNA of type II CRISPR loci if present in the organism. This chain is Ribonuclease 3, found in Streptococcus pneumoniae serotype 4 (strain ATCC BAA-334 / TIGR4).